Here is an 82-residue protein sequence, read N- to C-terminus: Protein C14 (82 aa).

The polypeptide is Protein C14 (Homo sapiens (Human)).